Reading from the N-terminus, the 414-residue chain is Snake venom metalloproteinase atrolysin-B (414 aa).

A signal peptide spans 1-20 (MIEVLLVTICLAVFPYQGSS). A propeptide spanning residues 21 to 190 (IILESGNVND…KASDLNLNPD (170 aa)) is cleaved from the precursor. Position 191 is a pyrrolidone carboxylic acid (Gln-191). In terms of domain architecture, Peptidase M12B spans 197 to 393 (RYIELVVVAD…YKPQCILNKP (197 aa)). Ca(2+) contacts are provided by Glu-200 and Asp-284. 2 disulfides stabilise this stretch: Cys-308-Cys-388 and Cys-348-Cys-355. His-333 provides a ligand contact to Zn(2+). Glu-334 is a catalytic residue. Positions 337 and 343 each coordinate Zn(2+). The Ca(2+) site is built by Cys-388, Asn-391, Val-403, Asn-406, Leu-408, Glu-410, and Glu-413. A propeptide spanning residues 394–414 (LRIDPVSTPVSGNELLEAGEE) is cleaved from the precursor.

This sequence belongs to the venom metalloproteinase (M12B) family. P-I subfamily. As to quaternary structure, monomer. Zn(2+) serves as cofactor. In terms of processing, the N-terminus is blocked. As to expression, expressed by the venom gland.

Its subcellular location is the secreted. It carries out the reaction Cleavage of 5-His-|-Leu-6, 10-His-|-Leu-11, 14-Ala-|-Leu-15, 16-Tyr-|-Leu-17 and 23-Gly-|-Phe-24 of insulin B chain. Identical to the cleavage of insulin B chain by atrolysin C. Also cleaves Xaa-|-Ser bonds in glucagon.. Snake venom metalloproteinase that impairs hemostasis in the envenomed animal. This chain is Snake venom metalloproteinase atrolysin-B, found in Crotalus atrox (Western diamondback rattlesnake).